We begin with the raw amino-acid sequence, 374 residues long: MPIIAVISKNNCQFDDLENYVLPLLYQYHDETTRLQLKNKLNDYLWEIIEPYVTFINCQSDIFMETICTHLVKEFPDKKLDDFFYHTESSFSFPKKHTELMYCQPTWSYQKDQEVNMNFIGCLFSLKHNVIENTCIVIANNYDISTQNNIVIGDVTKNDILRMVRRRYFFSAELIKNDTITKYYYQNPGYLVSKVFDLKEQDTIEKLTVGFLKYNLSFYCNQNKNQYVNKIATRINGLYQLYGDVLVLNEMDEHVYTNLSTHELRRLNVLAYGRLYDRQLKADEIHEESHVEVDEQGKEIEKKKTPLWSKYIIIDKRMSEWQNNKNKCFYCNKNIEKPVVCNKCFRIKYCSEKCQSEYNSYHSDDCINPKSITN.

Zn(2+)-binding residues include Cys328, Cys331, Cys341, Cys344, Cys350, Cys354, His362, and Cys366. An MYND-type zinc finger spans residues Cys328–Cys366.

The sequence is that of Putative zinc finger MYND domain-containing protein R331 from Acanthamoeba polyphaga (Amoeba).